The primary structure comprises 206 residues: Large ribosomal subunit protein uL4 (206 aa).

Positions 47–77 are disordered; the sequence is GTHDTKTRGEVSGGGRKPWRQKGTGRARHGS. Positions 63–77 are enriched in basic residues; that stretch reads KPWRQKGTGRARHGS.

This sequence belongs to the universal ribosomal protein uL4 family. As to quaternary structure, part of the 50S ribosomal subunit.

In terms of biological role, one of the primary rRNA binding proteins, this protein initially binds near the 5'-end of the 23S rRNA. It is important during the early stages of 50S assembly. It makes multiple contacts with different domains of the 23S rRNA in the assembled 50S subunit and ribosome. Functionally, forms part of the polypeptide exit tunnel. The sequence is that of Large ribosomal subunit protein uL4 from Carboxydothermus hydrogenoformans (strain ATCC BAA-161 / DSM 6008 / Z-2901).